The sequence spans 393 residues: Cholinephosphotransferase 1 (393 aa).

Residues 1 to 40 are Lumenal-facing; it reads MGFFIPQSSLGNLKLYKYQSDDRSFLSNHVLRPFWRKFAT. The chain crosses the membrane as a helical span at residues 41-61; it reads IFPLWMAPNLVTLLGFCFIIF. Residues 62–172 are Cytoplasmic-facing; sequence NVLTTLYYDP…YHTHKLYLAE (111 aa). A helical transmembrane segment spans residues 173–193; the sequence is FCGPVEGIIVLCISFIAVGIY. Residues 194 to 210 lie on the Lumenal side of the membrane; that stretch reads GPQTIWHTKVAQFSWQD. A helical membrane pass occupies residues 211–231; the sequence is FVFDVETVHLMYAFCTGALIF. The Cytoplasmic segment spans residues 232–263; sequence NIVTAHTNVVRYYESQSTKSATPSKTAENISK. The chain crosses the membrane as a helical span at residues 264 to 284; that stretch reads AVNGLLPFFAYFSSIFTLVLI. A topological domain (lumenal) is located at residue Q285. The chain crosses the membrane as a helical span at residues 286–306; the sequence is PSFISLALILSIGFSVAFVVG. At 307–320 the chain is on the cytoplasmic side; that stretch reads RMIIAHLTMQPFPM. Residues 321–341 form a helical membrane-spanning segment; it reads VNFPFLIPTIQLVLYAFMVYV. Over 342 to 348 the chain is Lumenal; it reads LDYQKGS. The chain crosses the membrane as a helical span at residues 349–369; it reads IVSALVWMGLGLTLAIHGMFI. Residues 370–393 lie on the Cytoplasmic side of the membrane; the sequence is NDIIYDITTFLDIYALSIKHPKEI.

Belongs to the CDP-alcohol phosphatidyltransferase class-I family. Mg(2+) serves as cofactor.

It localises to the microsome membrane. The protein resides in the endoplasmic reticulum membrane. It is found in the mitochondrion outer membrane. The catalysed reaction is CDP-choline + a 1,2-diacyl-sn-glycerol = a 1,2-diacyl-sn-glycero-3-phosphocholine + CMP + H(+). The enzyme catalyses CDP-N,N-dimethylethanolamine + a 1,2-diacyl-sn-glycerol = a 1,2-diacyl-sn-glycero-3-phospho-N,N-dimethylethanolamine + CMP + H(+). It participates in phospholipid metabolism; phosphatidylcholine biosynthesis; phosphatidylcholine from phosphocholine: step 2/2. With respect to regulation, requires a divalent cation activator, and is inhibited by CMP. Activated by phospholipids, especially phosphatidylcholine. In terms of biological role, catalyzes the final step in the CDP-choline route leading to phosphatidylcholin (PC). Preferentially uses CDP-monomethylethanolamine as aminoalcohol substrate. Shows highest activity toward di- and mono-unsaturated diacylglycerol species as lipid substrates. The CDP-choline pathway only contributes to net PC synthesis if exogenous choline is present. In its absence, this pathway recycles choline from PC turnover and may contribute to maintaining the proper PC species composition. The polypeptide is Cholinephosphotransferase 1 (CPT1) (Saccharomyces cerevisiae (strain ATCC 204508 / S288c) (Baker's yeast)).